We begin with the raw amino-acid sequence, 37 residues long: Photosystem II reaction center protein M (37 aa).

A helical transmembrane segment spans residues 7–27; sequence GFIAVLMFLAIPTAFLLIPYV.

Belongs to the PsbM family. In terms of assembly, PSII is composed of 1 copy each of membrane proteins PsbA, PsbB, PsbC, PsbD, PsbE, PsbF, PsbH, PsbI, PsbJ, PsbK, PsbL, PsbM, PsbT, PsbX, PsbY, PsbZ, Psb30/Ycf12, at least 3 peripheral proteins of the oxygen-evolving complex and a large number of cofactors. It forms dimeric complexes.

The protein localises to the plastid. It is found in the chloroplast thylakoid membrane. One of the components of the core complex of photosystem II (PSII). PSII is a light-driven water:plastoquinone oxidoreductase that uses light energy to abstract electrons from H(2)O, generating O(2) and a proton gradient subsequently used for ATP formation. It consists of a core antenna complex that captures photons, and an electron transfer chain that converts photonic excitation into a charge separation. This subunit is found at the monomer-monomer interface. This is Photosystem II reaction center protein M from Pinus koraiensis (Korean pine).